A 54-amino-acid polypeptide reads, in one-letter code: uncharacterized protein (54 aa).

Residues 13–54 (VAGDSGGNPENISIGTTSGAVVNKGPEQIPKKKKEESKEKEE) form a disordered region. Positions 20–32 (NPENISIGTTSGA) are enriched in polar residues. Positions 41-54 (IPKKKKEESKEKEE) are enriched in basic and acidic residues.

This is an uncharacterized protein from Enterobacteria phage T4 (Bacteriophage T4).